Here is a 165-residue protein sequence, read N- to C-terminus: Putative L,D-transpeptidase YkuD (165 aa).

Residues 2 to 46 (LMYQVKPGETLESIAADFRTTRQALLQANPGLNGGQVSAGQSIII) enclose the LysM domain. A L,D-TPase catalytic domain is found at 57-164 (YRIAVSLNGR…VPNGTRVSIT (108 aa)). H124 (proton donor/acceptor) is an active-site residue. The active-site Nucleophile is the C140.

The protein belongs to the YkuD family. As to quaternary structure, monomer.

It localises to the spore wall. It participates in cell wall biogenesis; peptidoglycan biosynthesis. Its function is as follows. Probable enzyme that may play an important role in cell wall biology. In Bacillus licheniformis (strain ATCC 14580 / DSM 13 / JCM 2505 / CCUG 7422 / NBRC 12200 / NCIMB 9375 / NCTC 10341 / NRRL NRS-1264 / Gibson 46), this protein is Putative L,D-transpeptidase YkuD.